The chain runs to 173 residues: Crossover junction endodeoxyribonuclease RuvC (173 aa).

Catalysis depends on residues Asp-8, Glu-69, and Asp-141. Asp-8, Glu-69, and Asp-141 together coordinate Mg(2+).

Belongs to the RuvC family. As to quaternary structure, homodimer which binds Holliday junction (HJ) DNA. The HJ becomes 2-fold symmetrical on binding to RuvC with unstacked arms; it has a different conformation from HJ DNA in complex with RuvA. In the full resolvosome a probable DNA-RuvA(4)-RuvB(12)-RuvC(2) complex forms which resolves the HJ. Requires Mg(2+) as cofactor.

It is found in the cytoplasm. It carries out the reaction Endonucleolytic cleavage at a junction such as a reciprocal single-stranded crossover between two homologous DNA duplexes (Holliday junction).. Its function is as follows. The RuvA-RuvB-RuvC complex processes Holliday junction (HJ) DNA during genetic recombination and DNA repair. Endonuclease that resolves HJ intermediates. Cleaves cruciform DNA by making single-stranded nicks across the HJ at symmetrical positions within the homologous arms, yielding a 5'-phosphate and a 3'-hydroxyl group; requires a central core of homology in the junction. The consensus cleavage sequence is 5'-(A/T)TT(C/G)-3'. Cleavage occurs on the 3'-side of the TT dinucleotide at the point of strand exchange. HJ branch migration catalyzed by RuvA-RuvB allows RuvC to scan DNA until it finds its consensus sequence, where it cleaves and resolves the cruciform DNA. This chain is Crossover junction endodeoxyribonuclease RuvC, found in Xylella fastidiosa (strain Temecula1 / ATCC 700964).